A 257-amino-acid chain; its full sequence is Type III pantothenate kinase (257 aa).

Position 6–13 (6–13 (DVGNTNTV)) interacts with ATP. Substrate is bound by residues Tyr-102 and 109–112 (GADR). Asp-111 serves as the catalytic Proton acceptor. Asp-131 contacts K(+). Thr-134 serves as a coordination point for ATP. Thr-186 serves as a coordination point for substrate.

This sequence belongs to the type III pantothenate kinase family. As to quaternary structure, homodimer. It depends on NH4(+) as a cofactor. Requires K(+) as cofactor.

Its subcellular location is the cytoplasm. It carries out the reaction (R)-pantothenate + ATP = (R)-4'-phosphopantothenate + ADP + H(+). Its pathway is cofactor biosynthesis; coenzyme A biosynthesis; CoA from (R)-pantothenate: step 1/5. Its function is as follows. Catalyzes the phosphorylation of pantothenate (Pan), the first step in CoA biosynthesis. The sequence is that of Type III pantothenate kinase from Leptospira interrogans serogroup Icterohaemorrhagiae serovar copenhageni (strain Fiocruz L1-130).